The chain runs to 358 residues: Chorismate synthase (358 aa).

NADP(+) is bound by residues Arg-46 and Arg-52. Residues 123-125 (RSS), 239-240 (NA), Gly-283, 298-302 (KSVAT), and Arg-324 each bind FMN.

Belongs to the chorismate synthase family. In terms of assembly, homotetramer. FMNH2 serves as cofactor.

The catalysed reaction is 5-O-(1-carboxyvinyl)-3-phosphoshikimate = chorismate + phosphate. Its pathway is metabolic intermediate biosynthesis; chorismate biosynthesis; chorismate from D-erythrose 4-phosphate and phosphoenolpyruvate: step 7/7. Functionally, catalyzes the anti-1,4-elimination of the C-3 phosphate and the C-6 proR hydrogen from 5-enolpyruvylshikimate-3-phosphate (EPSP) to yield chorismate, which is the branch point compound that serves as the starting substrate for the three terminal pathways of aromatic amino acid biosynthesis. This reaction introduces a second double bond into the aromatic ring system. This is Chorismate synthase from Parabacteroides distasonis (strain ATCC 8503 / DSM 20701 / CIP 104284 / JCM 5825 / NCTC 11152).